The following is a 194-amino-acid chain: ATP-dependent Clp protease proteolytic subunit (194 aa).

Catalysis depends on S98, which acts as the Nucleophile. H123 is a catalytic residue.

Belongs to the peptidase S14 family. In terms of assembly, fourteen ClpP subunits assemble into 2 heptameric rings which stack back to back to give a disk-like structure with a central cavity, resembling the structure of eukaryotic proteasomes.

It is found in the cytoplasm. The enzyme catalyses Hydrolysis of proteins to small peptides in the presence of ATP and magnesium. alpha-casein is the usual test substrate. In the absence of ATP, only oligopeptides shorter than five residues are hydrolyzed (such as succinyl-Leu-Tyr-|-NHMec, and Leu-Tyr-Leu-|-Tyr-Trp, in which cleavage of the -Tyr-|-Leu- and -Tyr-|-Trp bonds also occurs).. Functionally, cleaves peptides in various proteins in a process that requires ATP hydrolysis. Has a chymotrypsin-like activity. Plays a major role in the degradation of misfolded proteins. This chain is ATP-dependent Clp protease proteolytic subunit, found in Staphylococcus carnosus (strain TM300).